The sequence spans 501 residues: MSTLGDLLAEHTVLPGSAVDHLHAVVGEWQLLADLSFADYLMWVRRDDGVLVCVAQCRPNTGPTVVHTDAVGTVVAANSMPLVAATFSGGVPGREGAVGQQNSCQHDGHSVEVSPVRFGDQVVAVLTRHQPELAARRRSGHLETAYRLCATDLLRMLAEGTFPDAGDVAMSRSSPRAGDGFIRLDVDGVVSYASPNALSAYHRMGLTTELEGVNLIDATRPLISDPFEAHEVDEHVQDLLAGDGKGMRMEVDAGGATVLLRTLPLVVAGRNVGAAILIRDVTEVKRRDRALISKDATIREIHHRVKNNLQTVAALLRLQARRTSNAEGREALIESVRRVSSIALVHDALSMSVDEQVNLDEVIDRILPIMNDVASVDRPIRINRVGDLGVLDSDRATALIMVITELVQNAIEHAFDPAAAEGSVTIRAERSARWLDVVVHDDGLGLPQGFSLEKSDSLGLQIVRTLVSAELDGSLGMRDARERGTDVVLRVPVGRRGRLML.

A GAF region spans residues 4–150 (LGDLLAEHTV…HLETAYRLCA (147 aa)). The tract at residues 179-291 (DGFIRLDVDG…TEVKRRDRAL (113 aa)) is PAS-like. Residues 300 to 495 (EIHHRVKNNL…DVVLRVPVGR (196 aa)) enclose the Histidine kinase domain. His-303 carries the post-translational modification Phosphohistidine; by autocatalysis.

Autophosphorylated.

It is found in the cytoplasm. It catalyses the reaction ATP + protein L-histidine = ADP + protein N-phospho-L-histidine.. Member of the two-component regulatory system PdtaR/PdtaS. This two-component system plays an essential role in mycobacterial adaptation to poor nutrient conditions. Nutrient deprivation results in increasing intracellular concentrations of cyclic diguanosine monophosphate (c-di-GMP), which binds to the PdtaS sensor and promotes its autophosphorylation, leading to the activation of the signaling cascade. The phosphate group is then transferred to PdtaR. Its function is as follows. In addition, the PdtaR/PdtaS two-component system controls copper and nitric oxide (NO) resistance downstream of the intramembrane protease Rip1. This coupled Rip1/PdtaS/PdtaR circuit controls NO resistance and acute lung infection in mice by relieving PdtaR/PdtaS-mediated repression of isonitrile chalkophore biosynthesis. Two signals are required to fully inactivate the PdtaR/PdtaS system and mediate NO resistance: a cytoplasmic inhibitory signal through the PdtaS kinase mediated by direct sensing of NO and the production of PPE1-5', an NO-induced small RNA, to sequester PdtaR. In Mycobacterium tuberculosis (strain CDC 1551 / Oshkosh), this protein is Sensor histidine kinase PdtaS (pdtaS).